Consider the following 90-residue polypeptide: Probable two-component-system connector protein YmgA (90 aa).

Residues 63-80 (SDSGGPNRRTATADNKSM) show a composition bias toward polar residues. The interval 63-90 (SDSGGPNRRTATADNKSMFNGKKINRIH) is disordered.

In terms of biological role, probably a connector protein for RcsB/C regulation of biofilm formation, providing additional signal input into the two-component signaling pathway. May serve to stimulate biofilm maturation, probably via the Rcs phosphorelay. Mild overexpression at 16 degrees Celsius increases the production of colanic acid, an exopolysaccharide and matrix component, and reduces adhesive curli fimbriae expression. Both of these effects require RcsB. The polypeptide is Probable two-component-system connector protein YmgA (ymgA) (Escherichia coli (strain K12)).